We begin with the raw amino-acid sequence, 704 residues long: Polyribonucleotide nucleotidyltransferase (704 aa).

D487 and D493 together coordinate Mg(2+). The KH domain occupies 554-613; sequence PRLLTIKIHPDKIREVIGKGGSTIQAITKETGTQIDIQDDGTIIIASVNAIAAQAAKSRI. The region spanning 623–691 is the S1 motif domain; sequence GRIYEGKVAK…KQGRIRLSIK (69 aa).

The protein belongs to the polyribonucleotide nucleotidyltransferase family. As to quaternary structure, component of the RNA degradosome, which is a multiprotein complex involved in RNA processing and mRNA degradation. Mg(2+) serves as cofactor.

It localises to the cytoplasm. The enzyme catalyses RNA(n+1) + phosphate = RNA(n) + a ribonucleoside 5'-diphosphate. Functionally, involved in mRNA degradation. Catalyzes the phosphorolysis of single-stranded polyribonucleotides processively in the 3'- to 5'-direction. The protein is Polyribonucleotide nucleotidyltransferase of Xanthomonas axonopodis pv. citri (strain 306).